We begin with the raw amino-acid sequence, 90 residues long: Protein Z600 (90 aa).

2 positions are modified to phosphothreonine: Thr-22 and Thr-48. Positions 46 to 65 are disordered; it reads PATPSSSGHGKFQTELKKRR.

Component of the Frs-CycA-Cdk1 complex composed of Z600, CycA and Cdk1. Interacts preferentially with CycA (via C-terminus) but is also able to interact (via C-terminus) with CycE (via C-terminus).

It is found in the nucleus. Its function is as follows. Cell cycle regulator that is involved in modulating and adjusting cell proliferation according to the requirements of the developmental program. Interacts with mitotic Cdk1-cyclin complexes to inhibit mitotic entry at the G2/M transition. Likely to function by binding to the hydrophobic patch of cyclins to interfere with the interaction between the complex and certain Cdk1 substrates. At the mid-blastula transition, involved in the cell cycle arrest in G2 of cycle 14 by delaying mitosis and thus reducing cell proliferation allowing cell fate specification and morphogenesis to take place. Acts downstream or in parallel to the checkpoint regulator grp which is also required for the cell cycle pause at cycle 14. During gastrulation, delays mitosis in the ventral region of the embryonic mesoderm thus allowing invagination to be completed before cell division takes place. In Drosophila melanogaster (Fruit fly), this protein is Protein Z600.